The following is a 369-amino-acid chain: Phenylalanine--tRNA ligase alpha subunit (369 aa).

E269 contributes to the Mg(2+) binding site.

It belongs to the class-II aminoacyl-tRNA synthetase family. Phe-tRNA synthetase alpha subunit type 1 subfamily. In terms of assembly, tetramer of two alpha and two beta subunits. It depends on Mg(2+) as a cofactor.

It is found in the cytoplasm. It catalyses the reaction tRNA(Phe) + L-phenylalanine + ATP = L-phenylalanyl-tRNA(Phe) + AMP + diphosphate + H(+). This Brucella abortus (strain 2308) protein is Phenylalanine--tRNA ligase alpha subunit.